The primary structure comprises 762 residues: 5-methyltetrahydropteroyltriglutamate--homocysteine methyltransferase (762 aa).

5-methyltetrahydropteroyltri-L-glutamate is bound by residues 17 to 20 and Lys111; that span reads REWK. L-homocysteine-binding positions include 435 to 437 and Glu488; that span reads IGS. L-methionine contacts are provided by residues 435–437 and Glu488; that span reads IGS. 5-methyltetrahydropteroyltri-L-glutamate is bound by residues 519–520 and Trp565; that span reads RC. Asp603 is an L-homocysteine binding site. Asp603 contacts L-methionine. Glu609 is a 5-methyltetrahydropteroyltri-L-glutamate binding site. Zn(2+)-binding residues include His645, Cys647, and Glu669. His698 functions as the Proton donor in the catalytic mechanism. Cys730 contacts Zn(2+).

This sequence belongs to the vitamin-B12 independent methionine synthase family. The cofactor is Zn(2+).

It carries out the reaction 5-methyltetrahydropteroyltri-L-glutamate + L-homocysteine = tetrahydropteroyltri-L-glutamate + L-methionine. The protein operates within amino-acid biosynthesis; L-methionine biosynthesis via de novo pathway; L-methionine from L-homocysteine (MetE route): step 1/1. Functionally, catalyzes the transfer of a methyl group from 5-methyltetrahydrofolate to homocysteine resulting in methionine formation. This Bacillus thuringiensis subsp. konkukian (strain 97-27) protein is 5-methyltetrahydropteroyltriglutamate--homocysteine methyltransferase.